A 167-amino-acid polypeptide reads, in one-letter code: Endoribonuclease YbeY (167 aa).

The Zn(2+) site is built by His-131, His-135, and His-141.

The protein belongs to the endoribonuclease YbeY family. Zn(2+) serves as cofactor.

It is found in the cytoplasm. Its function is as follows. Single strand-specific metallo-endoribonuclease involved in late-stage 70S ribosome quality control and in maturation of the 3' terminus of the 16S rRNA. The protein is Endoribonuclease YbeY of Rickettsia felis (strain ATCC VR-1525 / URRWXCal2) (Rickettsia azadi).